Consider the following 1501-residue polypeptide: Inactive protein tyrosine kinase pTKL (1501 aa).

3 N-linked (GlcNAc...) asparagine glycosylation sites follow: Asn-64, Asn-128, and Asn-133. A compositionally biased stretch (basic residues) spans 204–221 (KKNKKNKKNKKKKNKKTK). A disordered region spans residues 204-223 (KKNKKNKKNKKKKNKKTKNT). N-linked (GlcNAc...) asparagine glycosylation is found at Asn-239, Asn-242, Asn-258, and Asn-327. A compositionally biased stretch (basic and acidic residues) spans 257-273 (MNISLHEKNDKKNEKKN). The disordered stretch occupies residues 257–276 (MNISLHEKNDKKNEKKNEKK). The region spanning 301–366 (WSLREVIQWL…LQLIKNLQVM (66 aa)) is the SAM domain. The interval 392–425 (NKNIKKGKNIKKEKKKKKEKNIKKEKKKKKKETK) is disordered. The span at 394–424 (NIKKGKNIKKEKKKKKEKNIKKEKKKKKKET) shows a compositional bias: basic residues. Residues 399–433 (KNIKKEKKKKKEKNIKKEKKKKKKETKKFNNMDKK) are a coiled coil. Asn-448, Asn-463, and Asn-471 each carry an N-linked (GlcNAc...) asparagine glycan. The RVxF motif 1 signature appears at 483-486 (KVSF). N-linked (GlcNAc...) asparagine glycosylation occurs at Asn-506. Residues 543-597 (QLSSPLSSPLSSPSPSSSPSSSPSSSPSSSPSSSPSPSSSPSPSSSPSSSPSSSP) are compositionally biased toward low complexity. Residues 543-607 (QLSSPLSSPL…SSPPSPLSYK (65 aa)) are disordered. A glycan (N-linked (GlcNAc...) asparagine) is linked at Asn-652. Positions 659–678 (IKKSKSKYNNDKKEQKKLPL) are disordered. A compositionally biased stretch (basic and acidic residues) spans 666–675 (YNNDKKEQKK). Residues Asn-681, Asn-712, Asn-737, Asn-811, and Asn-819 are each glycosylated (N-linked (GlcNAc...) asparagine). Residues 836 to 844 (QNINNFGKY) and Lys-864 each bind ATP. Residues Asn-1024, Asn-1031, Asn-1074, and Asn-1157 are each glycosylated (N-linked (GlcNAc...) asparagine). Positions 1088 to 1483 (FHYQHNVLCG…HILKTISTLY (396 aa)) constitute a Protein kinase domain. The RVxF motif 2 motif lies at 1238 to 1241 (KVLF). An N-linked (GlcNAc...) asparagine glycan is attached at Asn-1382.

The protein belongs to the protein kinase superfamily. TKL Ser/Thr protein kinase family. As to quaternary structure, interacts (via RVxF motif 1 and/or 2) with phosphatase PP1C. May interact (via SAM domain) with SERA5 (via C-terminus).

It is found in the parasitophorous vacuole. The protein localises to the host cell membrane. The protein resides in the host cytoplasm. It localises to the host cytoskeleton. This is Inactive protein tyrosine kinase pTKL from Plasmodium falciparum (isolate 3D7).